The sequence spans 283 residues: S-adenosylmethionine mitochondrial carrier protein homolog (283 aa).

Solcar repeat units lie at residues 11–84 (LKFF…GKQF), 93–178 (DSPY…FKLQ), and 187–275 (STPF…TTRI). 6 consecutive transmembrane segments (helical) span residues 14 to 34 (FHAL…LFPI), 55 to 75 (GIYK…ALFF), 99 to 119 (MAAA…VEIA), 152 to 172 (RGFG…FPLW), 190 to 210 (FSVA…TTPL), and 248 to 268 (FAGF…FFGF).

It belongs to the mitochondrial carrier (TC 2.A.29) family.

The protein localises to the mitochondrion inner membrane. Functionally, mitochondrial solute carriers shuttle metabolites, nucleotides, and cofactors through the mitochondrial inner membrane. May mediate the transport of S-adenosylmethionine (SAM) into the mitochondria. The protein is S-adenosylmethionine mitochondrial carrier protein homolog of Drosophila melanogaster (Fruit fly).